The following is a 126-amino-acid chain: Iron-sulfur cluster insertion protein ErpA (126 aa).

Positions 1 to 21 are disordered; sequence MNQPANQFNPSSSQPVDPTVL. Iron-sulfur cluster is bound by residues Cys-54, Cys-118, and Cys-120.

Belongs to the HesB/IscA family. As to quaternary structure, homodimer. The cofactor is iron-sulfur cluster.

In terms of biological role, required for insertion of 4Fe-4S clusters for at least IspG. The polypeptide is Iron-sulfur cluster insertion protein ErpA (Psychrobacter arcticus (strain DSM 17307 / VKM B-2377 / 273-4)).